The primary structure comprises 370 residues: Probable trehalose-phosphate phosphatase J (370 aa).

The protein belongs to the trehalose phosphatase family. A divalent metal cation is required as a cofactor.

It carries out the reaction alpha,alpha-trehalose 6-phosphate + H2O = alpha,alpha-trehalose + phosphate. It participates in glycan biosynthesis; trehalose biosynthesis. Its function is as follows. Removes the phosphate from trehalose 6-phosphate to produce free trehalose. Trehalose accumulation in plant may improve abiotic stress tolerance. This is Probable trehalose-phosphate phosphatase J (TPPJ) from Arabidopsis thaliana (Mouse-ear cress).